A 358-amino-acid chain; its full sequence is Phenylalanine--tRNA ligase alpha subunit (358 aa).

Glu-262 contributes to the Mg(2+) binding site.

Belongs to the class-II aminoacyl-tRNA synthetase family. Phe-tRNA synthetase alpha subunit type 1 subfamily. Tetramer of two alpha and two beta subunits. Mg(2+) is required as a cofactor.

It is found in the cytoplasm. It catalyses the reaction tRNA(Phe) + L-phenylalanine + ATP = L-phenylalanyl-tRNA(Phe) + AMP + diphosphate + H(+). This Streptomyces coelicolor (strain ATCC BAA-471 / A3(2) / M145) protein is Phenylalanine--tRNA ligase alpha subunit (pheS).